Reading from the N-terminus, the 213-residue chain is Thymidylate kinase (213 aa).

9–16 is a binding site for ATP; that stretch reads GLEGAGKS.

This sequence belongs to the thymidylate kinase family.

The catalysed reaction is dTMP + ATP = dTDP + ADP. Functionally, phosphorylation of dTMP to form dTDP in both de novo and salvage pathways of dTTP synthesis. This chain is Thymidylate kinase, found in Aeromonas hydrophila subsp. hydrophila (strain ATCC 7966 / DSM 30187 / BCRC 13018 / CCUG 14551 / JCM 1027 / KCTC 2358 / NCIMB 9240 / NCTC 8049).